Reading from the N-terminus, the 217-residue chain is Nitrile hydratase subunit beta (217 aa).

The protein belongs to the nitrile hydratase subunit beta family. As to quaternary structure, heterodimer of an alpha and a beta chain.

The enzyme catalyses an aliphatic primary amide = an aliphatic nitrile + H2O. NHase catalyzes the hydration of various nitrile compounds to the corresponding amides. The protein is Nitrile hydratase subunit beta (nthB) of Pseudomonas putida (Arthrobacter siderocapsulatus).